The sequence spans 417 residues: Serine hydroxymethyltransferase (417 aa).

Lys54 carries the N6-acetyllysine modification. (6S)-5,6,7,8-tetrahydrofolate is bound by residues Leu121 and 125–127 (GHL). Residue Lys229 is modified to N6-(pyridoxal phosphate)lysine. 3 positions are modified to N6-acetyllysine: Lys250, Lys285, and Lys354. Position 355-357 (355-357 (SPF)) interacts with (6S)-5,6,7,8-tetrahydrofolate. Position 375 is an N6-acetyllysine (Lys375).

It belongs to the SHMT family. In terms of assembly, homodimer. It depends on pyridoxal 5'-phosphate as a cofactor.

The protein localises to the cytoplasm. The enzyme catalyses (6R)-5,10-methylene-5,6,7,8-tetrahydrofolate + glycine + H2O = (6S)-5,6,7,8-tetrahydrofolate + L-serine. Its pathway is one-carbon metabolism; tetrahydrofolate interconversion. It participates in amino-acid biosynthesis; glycine biosynthesis; glycine from L-serine: step 1/1. Its function is as follows. Catalyzes the reversible interconversion of serine and glycine with tetrahydrofolate (THF) serving as the one-carbon carrier. This reaction serves as the major source of one-carbon groups required for the biosynthesis of purines, thymidylate, methionine, and other important biomolecules. Also exhibits THF-independent aldolase activity toward beta-hydroxyamino acids, producing glycine and aldehydes, via a retro-aldol mechanism. The sequence is that of Serine hydroxymethyltransferase from Escherichia coli O1:K1 / APEC.